We begin with the raw amino-acid sequence, 125 residues long: Large ribosomal subunit protein bL12 (125 aa).

Belongs to the bacterial ribosomal protein bL12 family. In terms of assembly, homodimer. Part of the ribosomal stalk of the 50S ribosomal subunit. Forms a multimeric L10(L12)X complex, where L10 forms an elongated spine to which 2 to 4 L12 dimers bind in a sequential fashion. Binds GTP-bound translation factors.

In terms of biological role, forms part of the ribosomal stalk which helps the ribosome interact with GTP-bound translation factors. Is thus essential for accurate translation. The protein is Large ribosomal subunit protein bL12 of Rickettsia canadensis (strain McKiel).